A 573-amino-acid chain; its full sequence is Splicing factor U2af large subunit A (573 aa).

The disordered stretch occupies residues 1 to 175; sequence MSEFEDHEGN…KSKQRVSGFD (175 aa). Residues 22–93 are compositionally biased toward basic and acidic residues; that stretch reads NGGRDGEIED…ERSRDKDRDH (72 aa). Over residues 94–105 the composition is skewed to basic residues; the sequence is RERHHRSSRHRD. The segment covering 106 to 141 has biased composition (basic and acidic residues); it reads HSRERGERRERGGRDDDDYRRSRDRDHDRRRDDRGG. Over residues 159 to 169 the composition is skewed to basic residues; that stretch reads TRSRSPSKSKQ. RRM domains are found at residues 239–322, 359–437, and 478–564; these read RRVY…RPSD, DRIF…RANQ, and QVVT…YPED.

Belongs to the splicing factor SR family. In terms of assembly, component of the spliceosome. Interacts with SUA. Interacts with SF1 in the nucleus.

The protein localises to the nucleus. Functionally, necessary for the splicing of pre-mRNA. The chain is Splicing factor U2af large subunit A from Arabidopsis thaliana (Mouse-ear cress).